A 354-amino-acid chain; its full sequence is Uroporphyrinogen decarboxylase (354 aa).

Residues 27 to 31, D77, Y154, S209, and H327 contribute to the substrate site; that span reads RQAGR.

It belongs to the uroporphyrinogen decarboxylase family. Homodimer.

The protein resides in the cytoplasm. It carries out the reaction uroporphyrinogen III + 4 H(+) = coproporphyrinogen III + 4 CO2. Its pathway is porphyrin-containing compound metabolism; protoporphyrin-IX biosynthesis; coproporphyrinogen-III from 5-aminolevulinate: step 4/4. Functionally, catalyzes the decarboxylation of four acetate groups of uroporphyrinogen-III to yield coproporphyrinogen-III. This Shewanella baltica (strain OS185) protein is Uroporphyrinogen decarboxylase.